A 1166-amino-acid polypeptide reads, in one-letter code: DEAD-box ATP-dependent RNA helicase 42 (1166 aa).

Basic and acidic residues-rich tracts occupy residues 1–12 (MEVEKSKYRSED) and 21–45 (DLKKSRRDRDRSNERKKDKGSEKRR). The disordered stretch occupies residues 1 to 460 (MEVEKSKYRS…NDDDPSLDED (460 aa)). Residues 14 to 95 (DVVEEEADLK…KDRVKRRSER (82 aa)) are a coiled coil. Residues 59-70 (SEDDYDRDDDEE) are compositionally biased toward acidic residues. A compositionally biased stretch (basic residues) spans 80 to 95 (ERRRRDKDRVKRRSER). Positions 101–110 (SEDDVEEEDE) are enriched in acidic residues. Positions 111 to 206 (RDKRRVNEKE…RERERSREVG (96 aa)) are enriched in basic and acidic residues. Positions 130–302 (RGKDRKRDRE…KRKKEEAESE (173 aa)) form a coiled coil. Ser210 carries the phosphoserine modification. Basic and acidic residues predominate over residues 224-314 (EGGERKEKER…GDADGNEPKA (91 aa)). Phosphoserine is present on Ser324. Basic and acidic residues-rich tracts occupy residues 344–357 (ETKPENDGDAKMVD) and 416–426 (MNGKESGDRPK). Residues 529 to 557 (KFWHQTGLTSKILDTMKKLNYEKPMPIQT) carry the Q motif motif. The Helicase ATP-binding domain occupies 560–738 (LPIIMSGRDC…RKVLNKPVEI (179 aa)). 573 to 580 (AKTGSGKT) provides a ligand contact to ATP. The DEAD box motif lies at 686 to 689 (DEAD). The 162-residue stretch at 749-910 (DITQLVEVRP…PVPDDLKALA (162 aa)) folds into the Helicase C-terminal domain.

It belongs to the DEAD box helicase family. DDX46/PRP5 subfamily.

The protein resides in the nucleus. The enzyme catalyses ATP + H2O = ADP + phosphate + H(+). Helicase required for pre-mRNA splicing, cold-responsive gene regulation and cold tolerance. The sequence is that of DEAD-box ATP-dependent RNA helicase 42 (RH42) from Arabidopsis thaliana (Mouse-ear cress).